The following is a 125-amino-acid chain: Fumarate reductase subunit D (125 aa).

3 consecutive transmembrane segments (helical) span residues 29 to 49 (VTAL…PLGW), 64 to 84 (NPIT…HAAH), and 102 to 122 (VIAL…GWML).

It belongs to the FrdD family. Part of an enzyme complex containing four subunits: a flavoprotein (FrdA), an iron-sulfur protein (FrdB), and two hydrophobic anchor proteins (FrdC and FrdD).

Its subcellular location is the cell membrane. Functionally, anchors the catalytic components of the fumarate reductase complex to the cell membrane, binds quinones. The sequence is that of Fumarate reductase subunit D from Mycobacterium bovis (strain BCG / Tokyo 172 / ATCC 35737 / TMC 1019).